A 191-amino-acid chain; its full sequence is Corticoliberin (191 aa).

A signal peptide spans 1-24 (MRLPLLVSAGVLLVALLPCPPCRA). The propeptide occupies 25–148 (LLSRGPVLGA…RQEAPERERR (124 aa)). A disordered region spans residues 115-153 (PLPRRPLDSPSGPAERGAENALSSRQEAPERERRSEEPP). Residues 141-151 (EAPERERRSEE) show a composition bias toward basic and acidic residues. Ile-189 carries the post-translational modification Isoleucine amide.

It belongs to the sauvagine/corticotropin-releasing factor/urotensin I family. Interacts (via C-terminus) with CRFR1 (via N-terminal extracellular domain). In terms of tissue distribution, produced by the hypothalamus.

It localises to the secreted. Hormone regulating the release of corticotropin from pituitary gland. Induces NLRP6 in intestinal epithelial cells, hence may influence gut microbiota profile. This is Corticoliberin (CRH) from Sus scrofa (Pig).